Consider the following 123-residue polypeptide: UPF0102 protein Csal_2201 (123 aa).

The protein belongs to the UPF0102 family.

The polypeptide is UPF0102 protein Csal_2201 (Chromohalobacter salexigens (strain ATCC BAA-138 / DSM 3043 / CIP 106854 / NCIMB 13768 / 1H11)).